The following is a 143-amino-acid chain: Biogenesis of lysosome-related organelles complex 1 subunit 2 (143 aa).

A disordered region spans residues 1-36; it reads MAAAAEGVPATRREEQPPRDDAAVETAEEAKEPAEA. Residue Ala-2 is modified to N-acetylalanine. A compositionally biased stretch (basic and acidic residues) spans 11–36; the sequence is TRREEQPPRDDAAVETAEEAKEPAEA. Positions 80–128 form a coiled coil; it reads EMKDIAINISRNLKDLNQKYAELQPYLDQINMIEEQVAALEQAAYKLDA.

It belongs to the BLOC1S2 family. As to quaternary structure, component of the biogenesis of lysosome-related organelles complex 1 (BLOC-1) composed of BLOC1S1, BLOC1S2, BLOC1S3, BLOC1S4, BLOC1S5, BLOC1S6, DTNBP1/BLOC1S7 and SNAPIN/BLOC1S8. Octamer composed of one copy each BLOC1S1, BLOC1S2, BLOC1S3, BLOC1S4, BLOC1S5, BLOC1S6, DTNBP1/BLOC1S7 and SNAPIN/BLOC1S8. Interacts directly with BLOC1S1, BLOC1S3, BLOC1S4, BLOC1S5 and SNAPIN. The BLOC-1 complex associates with the AP-3 protein complex and membrane protein cargos. Component of the BLOC-one-related complex (BORC) which is composed of BLOC1S1, BLOC1S2, BORCS5, BORCS6, BORCS7, BORCS8, KXD1 and SNAPIN. Interacts with gamma-tubulin. Interacts with IFT57.

The protein localises to the cytoplasm. It localises to the cytoskeleton. It is found in the microtubule organizing center. The protein resides in the centrosome. Its subcellular location is the lysosome membrane. Its function is as follows. Component of the BLOC-1 complex, a complex that is required for normal biogenesis of lysosome-related organelles (LRO), such as platelet dense granules and melanosomes. In concert with the AP-3 complex, the BLOC-1 complex is required to target membrane protein cargos into vesicles assembled at cell bodies for delivery into neurites and nerve terminals. The BLOC-1 complex, in association with SNARE proteins, is also proposed to be involved in neurite extension. As part of the BORC complex may play a role in lysosomes movement and localization at the cell periphery. Associated with the cytosolic face of lysosomes, the BORC complex may recruit ARL8B and couple lysosomes to microtubule plus-end-directed kinesin motor. This Mus musculus (Mouse) protein is Biogenesis of lysosome-related organelles complex 1 subunit 2 (Bloc1s2).